The sequence spans 605 residues: Bifunctional purine biosynthesis protein ADE16 (605 aa).

In terms of domain architecture, MGS-like spans 1–147; sequence MSSEAPIALL…KNHGRVSIIS (147 aa). Residues 35–38, 65–68, 102–103, and 126–127 each bind IMP; these read SGGT, RVKT, CN, and DI. Catalysis depends on Lys138, which acts as the Proton donor/acceptor; for FAICAR cyclization activity. 5-amino-1-(5-phospho-beta-D-ribosyl)imidazole-4-carboxamide is bound by residues 219 to 220, His279, Gly327, Asp350, Asn442, and Arg462; that span reads RY. His279 functions as the Proton acceptor; for AICAR formyltransferase activity in the catalytic mechanism. Residue Ile463 participates in (6R)-10-formyltetrahydrofolate binding. Residue Phe554 coordinates 5-amino-1-(5-phospho-beta-D-ribosyl)imidazole-4-carboxamide. Asp559 is a binding site for (6R)-10-formyltetrahydrofolate. A 5-amino-1-(5-phospho-beta-D-ribosyl)imidazole-4-carboxamide-binding site is contributed by Arg601.

This sequence belongs to the PurH family. In terms of assembly, homodimer.

It is found in the cytoplasm. It localises to the cytosol. The catalysed reaction is (6R)-10-formyltetrahydrofolate + 5-amino-1-(5-phospho-beta-D-ribosyl)imidazole-4-carboxamide = 5-formamido-1-(5-phospho-D-ribosyl)imidazole-4-carboxamide + (6S)-5,6,7,8-tetrahydrofolate. It carries out the reaction IMP + H2O = 5-formamido-1-(5-phospho-D-ribosyl)imidazole-4-carboxamide. It participates in purine metabolism; IMP biosynthesis via de novo pathway; 5-formamido-1-(5-phospho-D-ribosyl)imidazole-4-carboxamide from 5-amino-1-(5-phospho-D-ribosyl)imidazole-4-carboxamide (10-formyl THF route): step 1/1. It functions in the pathway purine metabolism; IMP biosynthesis via de novo pathway; IMP from 5-formamido-1-(5-phospho-D-ribosyl)imidazole-4-carboxamide: step 1/1. Bifunctional enzyme that catalyzes the last two steps of purine biosynthesis. Acts as a transformylase that incorporates a formyl group to the AMP analog AICAR (5-amino-1-(5-phospho-beta-D-ribosyl)imidazole-4-carboxamide) to produce the intermediate formyl-AICAR (FAICAR). Also catalyzes the cyclization of FAICAR to IMP. The polypeptide is Bifunctional purine biosynthesis protein ADE16 (Cryptococcus neoformans var. grubii serotype A (strain H99 / ATCC 208821 / CBS 10515 / FGSC 9487) (Filobasidiella neoformans var. grubii)).